A 340-amino-acid polypeptide reads, in one-letter code: UDP-N-acetylglucosamine--N-acetylmuramyl-(pentapeptide) pyrophosphoryl-undecaprenol N-acetylglucosamine transferase (340 aa).

Residues 10-12 (TGG), N124, S179, and Q277 each bind UDP-N-acetyl-alpha-D-glucosamine.

It belongs to the glycosyltransferase 28 family. MurG subfamily.

It is found in the cell inner membrane. It catalyses the reaction di-trans,octa-cis-undecaprenyl diphospho-N-acetyl-alpha-D-muramoyl-L-alanyl-D-glutamyl-meso-2,6-diaminopimeloyl-D-alanyl-D-alanine + UDP-N-acetyl-alpha-D-glucosamine = di-trans,octa-cis-undecaprenyl diphospho-[N-acetyl-alpha-D-glucosaminyl-(1-&gt;4)]-N-acetyl-alpha-D-muramoyl-L-alanyl-D-glutamyl-meso-2,6-diaminopimeloyl-D-alanyl-D-alanine + UDP + H(+). It participates in cell wall biogenesis; peptidoglycan biosynthesis. Cell wall formation. Catalyzes the transfer of a GlcNAc subunit on undecaprenyl-pyrophosphoryl-MurNAc-pentapeptide (lipid intermediate I) to form undecaprenyl-pyrophosphoryl-MurNAc-(pentapeptide)GlcNAc (lipid intermediate II). This is UDP-N-acetylglucosamine--N-acetylmuramyl-(pentapeptide) pyrophosphoryl-undecaprenol N-acetylglucosamine transferase from Sulfurimonas denitrificans (strain ATCC 33889 / DSM 1251) (Thiomicrospira denitrificans (strain ATCC 33889 / DSM 1251)).